The following is a 146-amino-acid chain: Phosphoribosyl-AMP cyclohydrolase (146 aa).

Mg(2+) is bound at residue Asp-95. Position 96 (Cys-96) interacts with Zn(2+). Mg(2+) is bound by residues Asp-97 and Asp-99. The Zn(2+) site is built by Cys-112 and Cys-119.

The protein belongs to the PRA-CH family. As to quaternary structure, homodimer. It depends on Mg(2+) as a cofactor. The cofactor is Zn(2+).

It is found in the cytoplasm. The catalysed reaction is 1-(5-phospho-beta-D-ribosyl)-5'-AMP + H2O = 1-(5-phospho-beta-D-ribosyl)-5-[(5-phospho-beta-D-ribosylamino)methylideneamino]imidazole-4-carboxamide. It functions in the pathway amino-acid biosynthesis; L-histidine biosynthesis; L-histidine from 5-phospho-alpha-D-ribose 1-diphosphate: step 3/9. Its function is as follows. Catalyzes the hydrolysis of the adenine ring of phosphoribosyl-AMP. The protein is Phosphoribosyl-AMP cyclohydrolase of Chromohalobacter salexigens (strain ATCC BAA-138 / DSM 3043 / CIP 106854 / NCIMB 13768 / 1H11).